Reading from the N-terminus, the 248-residue chain is Probable transcriptional regulatory protein RHECIAT_CH0003714 (248 aa).

Belongs to the TACO1 family.

It localises to the cytoplasm. The chain is Probable transcriptional regulatory protein RHECIAT_CH0003714 from Rhizobium etli (strain CIAT 652).